The chain runs to 170 residues: dCTP pyrophosphatase 1 (170 aa).

Residues 1-25 (MSTAGDGERGTVGQEDSAAARPFRF) are disordered. S2 carries the post-translational modification N-acetylserine. Phosphoserine is present on S2. Residues H38 and 47–51 (WEQFH) contribute to the substrate site. Mg(2+)-binding residues include E63 and E66. W73 is a substrate binding site. E95 and D98 together coordinate Mg(2+). Y102 is a substrate binding site. The segment at 150 to 170 (SENQAVGAGDPASELRDQAST) is disordered.

As to quaternary structure, homotetramer. Mg(2+) serves as cofactor. As to expression, ubiquitous. Highly expressed in heart, liver, skeletal muscle, cerebellum, brain, and salivary gland.

The protein resides in the cytoplasm. It localises to the cytosol. The enzyme catalyses dCTP + H2O = dCMP + diphosphate + H(+). With respect to regulation, inhibited by divalent calcium or cadmium ions. Hydrolyzes deoxynucleoside triphosphates (dNTPs) to the corresponding nucleoside monophosphates. Has a strong preference for dCTP and its analogs including 5-iodo-dCTP and 5-methyl-dCTP for which it may even have a higher efficiency. May protect DNA or RNA against the incorporation of these genotoxic nucleotide analogs through their catabolism. The chain is dCTP pyrophosphatase 1 from Mus musculus (Mouse).